A 257-amino-acid polypeptide reads, in one-letter code: Global transcriptional regulator CodY (257 aa).

The interval 1 to 155 (MSLLSKTREL…AATVIGMEIL (155 aa)) is GAF domain. The segment at residues 203–222 (ASKVADRVGITRSVIVNALR) is a DNA-binding region (H-T-H motif).

It belongs to the CodY family.

Its subcellular location is the cytoplasm. Its function is as follows. DNA-binding global transcriptional regulator which is involved in the adaptive response to starvation and acts by directly or indirectly controlling the expression of numerous genes in response to nutrient availability. During rapid exponential growth, CodY is highly active and represses genes whose products allow adaptation to nutrient depletion. The protein is Global transcriptional regulator CodY of Staphylococcus epidermidis (strain ATCC 12228 / FDA PCI 1200).